The sequence spans 1203 residues: Cation-transporting ATPase catp-5 (1203 aa).

Over 1 to 68 the chain is Cytoplasmic; it reads MNTSEREPLL…YAYKETIGRQ (68 aa). Residues 21–42 are disordered; it reads TTDNPSTKIMKREKDNPKAKTT. The chain crosses the membrane as a helical span at residues 69-89; sequence ILFWLLTIVTLGFYQLLAYWV. At 90 to 209 the chain is on the extracellular side; it reads KSLFVKVRFQ…RKIYNMNALA (120 aa). A helical membrane pass occupies residues 210-230; it reads LALTPILVILFKEVLGPFYLF. Over 231–242 the chain is Cytoplasmic; that stretch reads QCFSVALWYSDN. Residues 243–263 form a helical membrane-spanning segment; the sequence is YAYYASVIVIITVGSAAVAVY. Residues 264–297 are Extracellular-facing; that stretch reads QMRAQEKRIRNMVGDTISVIVRRDGHDITIDASE. Residues 298-318 form a helical membrane-spanning segment; that stretch reads IVPMDILILPSNTFILPCDCL. Residues 319-414 are Cytoplasmic-facing; the sequence is LMNGTVIVNE…KPQEKEALKD (96 aa). Residues 415-435 traverse the membrane as a helical segment; sequence VMVFILVLGFIALIGFIYTVI. The Extracellular segment spans residues 436 to 451; the sequence is EMVSRGESLKHIIIRS. A helical transmembrane segment spans residues 452 to 472; the sequence is LDIITIVVPPALPAAMSVGII. Over 473–935 the chain is Cytoplasmic; the sequence is NANSRLKKKK…KEGRCALVTS (463 aa). Aspartate 503 functions as the 4-aspartylphosphate intermediate in the catalytic mechanism. Positions 595-617 are disordered; sequence ETQDFDTVQPTVLRPPPEQATYH. Positions 883 and 887 each coordinate Mg(2+). Residues 936–956 form a helical membrane-spanning segment; sequence YAVSKYMAAYSLNEFLSVMLL. Over 957 to 962 the chain is Extracellular; that stretch reads YNDGTN. Residues 963 to 983 traverse the membrane as a helical segment; it reads ISDGQFLYIDLVLITLVALFL. The Cytoplasmic segment spans residues 984–1007; sequence GNTEASRKLSGIPPPRRLATSAFY. A helical membrane pass occupies residues 1008–1028; it reads FSVFGQMFFNIITQTTGYLLV. Topologically, residues 1029–1046 are extracellular; the sequence is RGQSWYVPNPEELDNTTT. A helical membrane pass occupies residues 1047 to 1067; the sequence is MIGTTVFFTSCCMYLGYAFVY. Over 1068–1085 the chain is Cytoplasmic; it reads SKGHPYRRSVFTNWLLCG. Residues 1086 to 1106 form a helical membrane-spanning segment; it reads IIFVIGAINMVMIFTNMGFLM. Residues 1107-1120 are Extracellular-facing; sequence NLMGFVYVPSTSMR. A helical membrane pass occupies residues 1121–1141; it reads FILLAISLAGVFLSLLYEHFF. At 1142 to 1203 the chain is on the cytoplasmic side; it reads VEKVVAIHFE…DRKETIESKC (62 aa).

The protein belongs to the cation transport ATPase (P-type) (TC 3.A.3) family. Type V subfamily. As to expression, expressed in the 20 intestinal cells and in the excretory cell.

Its subcellular location is the apical cell membrane. It carries out the reaction ATP + H2O = ADP + phosphate + H(+). Involved in the uptake and/or transport of polyamines, probably through ATP hydrolysis. This contributes to the maintenance of intracellular polyamine levels. Polyamines are essential for cell proliferation and are implicated in cellular processes, ranging from DNA replication to apoptosis. This Caenorhabditis elegans protein is Cation-transporting ATPase catp-5.